A 695-amino-acid polypeptide reads, in one-letter code: Probable rhamnogalacturonate lyase C (695 aa).

The first 21 residues, 1 to 21 (MFLPSRKALAFLACLASHSVA), serve as a signal peptide directing secretion. Residues N28, N96, N118, N144, N199, N285, N532, and N638 are each glycosylated (N-linked (GlcNAc...) asparagine).

Belongs to the polysaccharide lyase 4 family.

The protein localises to the secreted. The catalysed reaction is Endotype eliminative cleavage of L-alpha-rhamnopyranosyl-(1-&gt;4)-alpha-D-galactopyranosyluronic acid bonds of rhamnogalacturonan I domains in ramified hairy regions of pectin leaving L-rhamnopyranose at the reducing end and 4-deoxy-4,5-unsaturated D-galactopyranosyluronic acid at the non-reducing end.. Pectinolytic enzymes consist of four classes of enzymes: pectin lyase, polygalacturonase, pectin methylesterase and rhamnogalacturonase. Degrades the rhamnogalacturonan I (RG-I) backbone of pectin. The chain is Probable rhamnogalacturonate lyase C (rglC) from Aspergillus oryzae (strain ATCC 42149 / RIB 40) (Yellow koji mold).